The following is a 169-amino-acid chain: Unfolded protein response-inducible protein 1 (169 aa).

Its function is as follows. Involved in the unfolded protein response (UPR), a transcriptional response which up-regulates genes that enable cells to cope with misfolded, endoplasmic reticulum-retained proteins. UPR is part of the endoplasmic reticulum quality control (ERQC) which prevents the exit of misfolded secretory and membrane proteins from the endoplasmic reticulum. The polypeptide is Unfolded protein response-inducible protein 1 (ULI1) (Saccharomyces cerevisiae (strain ATCC 204508 / S288c) (Baker's yeast)).